Reading from the N-terminus, the 236-residue chain is Cytochrome b-c1 complex subunit Rieske-4, mitochondrial (236 aa).

The transit peptide at 1 to 24 (MINFGSCWGLASVTSNSFSIISGF) directs the protein to the mitochondrion. Residues 25–73 (SSNSVSHAHDMGLVPDLPPTVAAIKNPTSKIVYDEHNHERYPPGDPSKR) are Mitochondrial matrix-facing. The chain crosses the membrane as a helical span at residues 74-96 (AFAYFVLTGGRFVYASLVRLLIL). The Mitochondrial intermembrane segment spans residues 97–236 (KFVLSMSASK…FLEENKLLIG (140 aa)). Positions 146-234 (INLANSVDLG…YSFLEENKLL (89 aa)) constitute a Rieske domain. The [2Fe-2S] cluster site is built by Cys179, His181, Cys198, and His201. Cys184 and Cys200 form a disulfide bridge.

Belongs to the Rieske iron-sulfur protein family. Component of the ubiquinol-cytochrome c oxidoreductase (cytochrome b-c1 complex, complex III, CIII), a multisubunit enzyme composed of 3 respiratory subunits cytochrome b, cytochrome c1 and Rieske protein, 2 core protein subunits, and several low-molecular weight protein subunits. The complex exists as an obligatory dimer and forms supercomplexes (SCs) in the inner mitochondrial membrane with cytochrome c oxidase (complex IV, CIV). [2Fe-2S] cluster serves as cofactor.

The protein resides in the mitochondrion inner membrane. It carries out the reaction a quinol + 2 Fe(III)-[cytochrome c](out) = a quinone + 2 Fe(II)-[cytochrome c](out) + 2 H(+)(out). Component of the ubiquinol-cytochrome c oxidoreductase, a multisubunit transmembrane complex that is part of the mitochondrial electron transport chain which drives oxidative phosphorylation. The respiratory chain contains 3 multisubunit complexes succinate dehydrogenase (complex II, CII), ubiquinol-cytochrome c oxidoreductase (cytochrome b-c1 complex, complex III, CIII) and cytochrome c oxidase (complex IV, CIV), that cooperate to transfer electrons derived from NADH and succinate to molecular oxygen, creating an electrochemical gradient over the inner membrane that drives transmembrane transport and the ATP synthase. The cytochrome b-c1 complex catalyzes electron transfer from ubiquinol to cytochrome c, linking this redox reaction to translocation of protons across the mitochondrial inner membrane, with protons being carried across the membrane as hydrogens on the quinol. In the process called Q cycle, 2 protons are consumed from the matrix, 4 protons are released into the intermembrane space and 2 electrons are passed to cytochrome c. The Rieske protein is a catalytic core subunit containing a [2Fe-2S] iron-sulfur cluster. It cycles between 2 conformational states during catalysis to transfer electrons from the quinol bound in the Q(0) site in cytochrome b to cytochrome c1. The protein is Cytochrome b-c1 complex subunit Rieske-4, mitochondrial of Nicotiana tabacum (Common tobacco).